A 139-amino-acid chain; its full sequence is D-ribose pyranase (139 aa).

Residue His20 is the Proton donor of the active site. Substrate contacts are provided by residues Asp28, His106, and 128 to 130 (YAN).

The protein belongs to the RbsD / FucU family. RbsD subfamily. In terms of assembly, homodecamer.

Its subcellular location is the cytoplasm. The enzyme catalyses beta-D-ribopyranose = beta-D-ribofuranose. Its pathway is carbohydrate metabolism; D-ribose degradation; D-ribose 5-phosphate from beta-D-ribopyranose: step 1/2. Functionally, catalyzes the interconversion of beta-pyran and beta-furan forms of D-ribose. This chain is D-ribose pyranase, found in Photorhabdus laumondii subsp. laumondii (strain DSM 15139 / CIP 105565 / TT01) (Photorhabdus luminescens subsp. laumondii).